We begin with the raw amino-acid sequence, 762 residues long: cGMP-dependent protein kinase 2 (762 aa).

A disordered region spans residues 1–26 (MGNGSVKPKHAKHPDGHSGNLSNEAL). Gly-2 carries the N-myristoyl glycine lipid modification. Phosphoserine occurs at positions 110 and 117. Residues 118 to 138 (RRGAKAGVSAEPTTRTYDLNK) are disordered. The cGMP-binding, high affinity; cAMP-binding, moderate affinity stretch occupies residues 168–283 (FLKRLDPQQI…DEEYRNFLRS (116 aa)). 3',5'-cyclic GMP contacts are provided by residues 232–235 (GELA), 242–243 (RT), Lys-347, 356–359 (GEKA), 366–367 (RS), Asp-412, and Arg-415. The interval 286–416 (LLKNLPEDKL…TLNRDDEKRH (131 aa)) is cGMP-binding, high affinity; cAMP-binding, low affinity. Ser-431 is modified (phosphoserine). The 259-residue stretch at 453 to 711 (LEIIATLGVG…INDIKKHRWL (259 aa)) folds into the Protein kinase domain. ATP-binding positions include 459–467 (LGVGGFGRV) and Lys-482. The Proton acceptor role is filled by Asp-576. At Thr-609 the chain carries Phosphothreonine. Residues 712 to 762 (NGFNWEGLKARSLPSPLRRELSGPIDHSYFDKYPPEKGVPPDEMSGWDKDF) form the AGC-kinase C-terminal domain. The tract at residues 740 to 762 (YFDKYPPEKGVPPDEMSGWDKDF) is disordered.

This sequence belongs to the protein kinase superfamily. AGC Ser/Thr protein kinase family. cGMP subfamily. In terms of assembly, interacts with GRIA1/GLUR1. Post-translationally, myristoylation mediates membrane localization.

It is found in the apical cell membrane. It localises to the cell membrane. It catalyses the reaction L-seryl-[protein] + ATP = O-phospho-L-seryl-[protein] + ADP + H(+). The catalysed reaction is L-threonyl-[protein] + ATP = O-phospho-L-threonyl-[protein] + ADP + H(+). Its activity is regulated as follows. Binding of cGMP results in enzyme activation. Functionally, crucial regulator of intestinal secretion and bone growth. Phosphorylates and activates CFTR on the plasma membrane. Plays a key role in intestinal secretion by regulating cGMP-dependent translocation of CFTR in jejunum. Acts downstream of NMDAR to activate the plasma membrane accumulation of GRIA1/GLUR1 in synapse and increase synaptic plasticity. Phosphorylates GRIA1/GLUR1 at Ser-863. Acts as a regulator of gene expression and activator of the extracellular signal-regulated kinases MAPK3/ERK1 and MAPK1/ERK2 in mechanically stimulated osteoblasts. Under fluid shear stress, mediates ERK activation and subsequent induction of FOS, FOSL1/FRA1, FOSL2/FRA2 and FOSB that play a key role in the osteoblast anabolic response to mechanical stimulation. In Mus musculus (Mouse), this protein is cGMP-dependent protein kinase 2 (Prkg2).